Here is a 308-residue protein sequence, read N- to C-terminus: D-alanine--D-alanine ligase (308 aa).

Residues Lys-104 to Glu-301 form the ATP-grasp domain. ATP is bound at residue Ile-130 to Thr-185. Mg(2+) is bound by residues Asp-255, Glu-268, and Asn-270.

The protein belongs to the D-alanine--D-alanine ligase family. It depends on Mg(2+) as a cofactor. Mn(2+) serves as cofactor.

Its subcellular location is the cytoplasm. It catalyses the reaction 2 D-alanine + ATP = D-alanyl-D-alanine + ADP + phosphate + H(+). It functions in the pathway cell wall biogenesis; peptidoglycan biosynthesis. Cell wall formation. This chain is D-alanine--D-alanine ligase, found in Acinetobacter baumannii (strain ACICU).